Consider the following 273-residue polypeptide: Large ribosomal subunit protein uL2 (273 aa).

Disordered stretches follow at residues 28–53 (KPFA…TTRH) and 221–273 (RGTA…RRSK). The span at 39–48 (KSGGRNNNGR) shows a compositional bias: low complexity. Lys242 is subject to N6-acetyllysine.

This sequence belongs to the universal ribosomal protein uL2 family. As to quaternary structure, part of the 50S ribosomal subunit. Forms a bridge to the 30S subunit in the 70S ribosome.

One of the primary rRNA binding proteins. Required for association of the 30S and 50S subunits to form the 70S ribosome, for tRNA binding and peptide bond formation. It has been suggested to have peptidyltransferase activity; this is somewhat controversial. Makes several contacts with the 16S rRNA in the 70S ribosome. The sequence is that of Large ribosomal subunit protein uL2 from Shigella dysenteriae serotype 1 (strain Sd197).